The following is a 777-amino-acid chain: Subtilisin-like protease SBT3.7 (777 aa).

Positions 1-22 (MRNHRTSIFVVLSLVIILNGQS) are cleaved as a signal peptide. Residues 23 to 113 (GFLPRAGAES…VIPDRFYKPA (91 aa)) constitute a propeptide, activation peptide. The 78-residue stretch at 34–111 (VHIVYLGEKQ…VHVIPDRFYK (78 aa)) folds into the Inhibitor I9 domain. Residues 117-624 (TWDYLGLSPT…GGLVNPEKAT (508 aa)) enclose the Peptidase S8 domain. The N-linked (GlcNAc...) asparagine glycan is linked to N133. D147 acts as the Charge relay system in catalysis. N180 and N206 each carry an N-linked (GlcNAc...) asparagine glycan. The Charge relay system role is filled by H222. N237, N397, N412, and N540 each carry an N-linked (GlcNAc...) asparagine glycan. One can recognise a PA domain in the interval 386 to 481 (SLVYPENPGN…ELGTYILFYI (96 aa)). S555 serves as the catalytic Charge relay system. N-linked (GlcNAc...) asparagine glycans are attached at residues N647, N723, and N758.

Belongs to the peptidase S8 family.

It localises to the secreted. This is Subtilisin-like protease SBT3.7 from Arabidopsis thaliana (Mouse-ear cress).